A 253-amino-acid chain; its full sequence is Patatin-like phospholipase domain-containing protein 4 (253 aa).

In terms of domain architecture, PNPLA spans 6-176 (LSFAACGFLG…TNALPILPVG (171 aa)). Residues 41–45 (GASAG) carry the GXSXG motif. Serine 43 acts as the Nucleophile in catalysis. The Proton acceptor role is filled by aspartate 163. A DGA/G motif is present at residues 163 to 165 (DGG).

In terms of tissue distribution, expressed in all tissues examined, including heart, brain, placenta, lung, liver, muscle, kidney, pancreas and spleen.

The protein localises to the mitochondrion. The enzyme catalyses a triacylglycerol + H2O = a diacylglycerol + a fatty acid + H(+). It carries out the reaction a 1,2-diacyl-sn-glycero-3-phosphocholine + H2O = a 1-acyl-sn-glycero-3-phosphocholine + a fatty acid + H(+). It catalyses the reaction an all-trans-retinyl ester + H2O = all-trans-retinol + a fatty acid + H(+). The catalysed reaction is 2 a 1-acylglycerol = a 1,2-diacylglycerol + glycerol. The enzyme catalyses a 1-acylglycerol + a 1,2-diacylglycerol = a triacylglycerol + glycerol. It carries out the reaction a 1-acylglycerol + a 1,3-diacylglycerol = a triacylglycerol + glycerol. It catalyses the reaction a triacylglycerol + H2O = a 1,2-diacylglycerol + a fatty acid + H(+). The catalysed reaction is a triacylglycerol + H2O = a 1,3-diacylglycerol + a fatty acid + H(+). The enzyme catalyses a triacylglycerol + all-trans-retinol = an all-trans-retinyl ester + a diacylglycerol. It carries out the reaction 2 1-(9Z-octadecenoyl)-glycerol = 1,2-di-(9Z-octadecenoyl)-glycerol + glycerol. It catalyses the reaction 1-(9Z-octadecenoyl)-glycerol + 1,2-di-(9Z-octadecenoyl)-glycerol = 1,2,3-tri-(9Z-octadecenoyl)-glycerol + glycerol. The catalysed reaction is 1-(9Z-octadecenoyl)-glycerol + 1,3-di-(9Z-octadecenoyl)-glycerol = 1,2,3-tri-(9Z-octadecenoyl)-glycerol + glycerol. The enzyme catalyses 1,2-di-(9Z-octadecenoyl)-glycerol + (9Z)-octadecenoate + H(+) = 1,2,3-tri-(9Z-octadecenoyl)-glycerol + H2O. It carries out the reaction 1,2,3-tri-(9Z-octadecenoyl)-glycerol + H2O = 1,3-di-(9Z-octadecenoyl)-glycerol + (9Z)-octadecenoate + H(+). It catalyses the reaction all-trans-retinyl hexadecanoate + H2O = all-trans-retinol + hexadecanoate + H(+). The catalysed reaction is 1,2,3-tri-(9Z-octadecenoyl)-glycerol + all-trans-retinol = all-trans-retinyl 9Z-octadecenoate + di-(9Z)-octadecenoylglycerol. With respect to regulation, the triglyceride lipase activity is inhibited by BEL ((E)-6-(bromomethylene)-3-(1-naphthalenyl)-2H-tetrahydropyran-2-one), a suicide substrate inhibitor. Functionally, has abundant triacylglycerol lipase activity. Transfers fatty acid from triglyceride to retinol, hydrolyzes retinylesters, and generates 1,3-diacylglycerol from triglycerides. Additionally possesses acylglycerol transacylase and phospholipase A2 activities. The polypeptide is Patatin-like phospholipase domain-containing protein 4 (Homo sapiens (Human)).